The primary structure comprises 109 residues: Nucleoid-associated protein Psyc_0793 (109 aa).

Belongs to the YbaB/EbfC family. As to quaternary structure, homodimer.

Its subcellular location is the cytoplasm. The protein resides in the nucleoid. Binds to DNA and alters its conformation. May be involved in regulation of gene expression, nucleoid organization and DNA protection. The chain is Nucleoid-associated protein Psyc_0793 from Psychrobacter arcticus (strain DSM 17307 / VKM B-2377 / 273-4).